A 328-amino-acid chain; its full sequence is Acetyl-coenzyme A carboxylase carboxyl transferase subunit alpha (328 aa).

The CoA carboxyltransferase C-terminal domain occupies 42–296; that stretch reads SFKEQLSILK…KESLISELHF (255 aa).

This sequence belongs to the AccA family. Acetyl-CoA carboxylase is a heterohexamer composed of biotin carboxyl carrier protein (accB), biotin carboxylase (accC) and two subunits each of ACCase subunit alpha (accA) and ACCase subunit beta (accD).

It localises to the plastid. Its subcellular location is the chloroplast. It catalyses the reaction N(6)-carboxybiotinyl-L-lysyl-[protein] + acetyl-CoA = N(6)-biotinyl-L-lysyl-[protein] + malonyl-CoA. The protein operates within lipid metabolism; malonyl-CoA biosynthesis; malonyl-CoA from acetyl-CoA: step 1/1. Component of the acetyl coenzyme A carboxylase (ACC) complex. First, biotin carboxylase catalyzes the carboxylation of biotin on its carrier protein (BCCP) and then the CO(2) group is transferred by the carboxyltransferase to acetyl-CoA to form malonyl-CoA. The sequence is that of Acetyl-coenzyme A carboxylase carboxyl transferase subunit alpha from Gracilaria tenuistipitata var. liui (Red alga).